Consider the following 213-residue polypeptide: Glycerol-3-phosphate acyltransferase (213 aa).

The next 6 helical transmembrane spans lie at 2–22, 52–74, 81–100, 112–132, 143–163, and 164–184; these read ITIVLLILAYLLGSIPSGLWI, AGMATFVIDFFKGTLATLLPIIF, PLIFGLLAVIGHTFPIFAGF, VIFGFAPIFCLYLAIIFFGAL, VTASIAAVIGVLLFPLFGFIL, and SNYDFLFIAIILALASLIIIR.

The protein belongs to the PlsY family. Probably interacts with PlsX.

Its subcellular location is the cell membrane. It carries out the reaction an acyl phosphate + sn-glycerol 3-phosphate = a 1-acyl-sn-glycero-3-phosphate + phosphate. Its pathway is lipid metabolism; phospholipid metabolism. Its function is as follows. Catalyzes the transfer of an acyl group from acyl-phosphate (acyl-PO(4)) to glycerol-3-phosphate (G3P) to form lysophosphatidic acid (LPA). This enzyme utilizes acyl-phosphate as fatty acyl donor, but not acyl-CoA or acyl-ACP. This is Glycerol-3-phosphate acyltransferase from Streptococcus pneumoniae (strain CGSP14).